The following is a 286-amino-acid chain: tRNA pseudouridine synthase B (286 aa).

The Nucleophile role is filled by aspartate 40.

This sequence belongs to the pseudouridine synthase TruB family. Type 1 subfamily.

The catalysed reaction is uridine(55) in tRNA = pseudouridine(55) in tRNA. In terms of biological role, responsible for synthesis of pseudouridine from uracil-55 in the psi GC loop of transfer RNAs. This chain is tRNA pseudouridine synthase B, found in Mesoplasma florum (strain ATCC 33453 / NBRC 100688 / NCTC 11704 / L1) (Acholeplasma florum).